The primary structure comprises 394 residues: 3-amino-4-hydroxybenzoate 2-monooxygenase (394 aa).

FAD contacts are provided by Ala16 and Arg109. Tyr214 (proton acceptor) is an active-site residue. Asp287 serves as a coordination point for FAD.

Belongs to the 6-hydroxynicotinate 3-monooxygenase family. Requires FAD as cofactor.

The catalysed reaction is 3-amino-4-hydroxybenzoate + NADPH + O2 + H(+) = 3-amino-2,4-dihydroxybenzoate + NADP(+) + H2O. It functions in the pathway antibiotic biosynthesis. Part of a gene cluster involved in the biosynthesis of cremeomycin, a light-sensitive o-diazoquinone with antibacterial and antiproliferative effects. Catalyzes the hydroxylation of 3-amino-4-hydroxybenzoate (3,4-AHBA) to 3-amino-2,4-dihydroxybenzoate (3,2,4-ADHBA). The sequence is that of 3-amino-4-hydroxybenzoate 2-monooxygenase from Streptomyces cremeus.